Reading from the N-terminus, the 446-residue chain is Glutamine synthetase (446 aa).

The 86-residue stretch at 18-103 (ENVRYLRLQF…LICDVYKTDG (86 aa)) folds into the GS beta-grasp domain. The region spanning 110 to 446 (PRANLKRVLK…WERDQYMKQY (337 aa)) is the GS catalytic domain. Mg(2+) contacts are provided by glutamate 134 and glutamate 136. Glutamate 186 contributes to the ATP binding site. Glutamate 191 and glutamate 198 together coordinate Mg(2+). L-glutamate is bound by residues 242-243 (NG) and glycine 243. Histidine 247 contributes to the Mg(2+) binding site. Serine 251 serves as a coordination point for ATP. Arginine 300, glutamate 306, and arginine 318 together coordinate L-glutamate. ATP-binding residues include arginine 318 and arginine 323. Glutamate 335 is a binding site for Mg(2+). L-glutamate is bound at residue arginine 337.

This sequence belongs to the glutamine synthetase family. Oligomer of 12 subunits arranged in the form of two hexagons. In its feedback-inhibited form, interacts with TnrA in order to block its DNA-binding activity. Mg(2+) is required as a cofactor.

The protein localises to the cytoplasm. The catalysed reaction is L-glutamate + NH4(+) + ATP = L-glutamine + ADP + phosphate + H(+). Its activity is regulated as follows. Inhibited by glutamine. In terms of biological role, glutamine synthetase (GS) is an unusual multitasking protein that functions as an enzyme, a transcription coregulator, and a chaperone in ammonium assimilation and in the regulation of genes involved in nitrogen metabolism. It catalyzes the ATP-dependent biosynthesis of glutamine from glutamate and ammonia. Feedback-inhibited GlnA also interacts with and regulates the activity of the transcriptional regulator TnrA. During nitrogen limitation, TnrA is in its DNA-binding active state and turns on the transcription of genes required for nitrogen assimilation. Under conditions of nitrogen excess, feedback-inhibited GlnA forms a stable complex with TnrA, which inhibits its DNA-binding activity. In contrast, feedback-inhibited GlnA acts as a chaperone to stabilize the DNA-binding activity of GlnR, which represses the transcription of nitrogen assimilation genes. In Staphylococcus aureus (strain N315), this protein is Glutamine synthetase.